A 230-amino-acid polypeptide reads, in one-letter code: MVKLVFARHGESEWNKANLFTGWADVDLSEEGTQQAIDAGKLIKEADIKFDLAFTSVLTRAIKTTNLALEYSDQLWVPVEKSWRLNERHYGGLTGKNKAEAAEKFGDEQVHIWRRSYDVLPPAMAKDDPYSAHTDRRYANLDDTVIPDAENLKVTLERALPYWEDKIAPALKDGKNVFVGAHGNSIRALVKHIKQLSDDDIMGVEIPNFPPLVFEFDENLNVTAEYYLGK.

Residues 8–15 (RHGESEWN), 21–22 (TG), Arg60, 87–90 (ERHY), Lys98, 114–115 (RR), and 183–184 (GN) each bind substrate. Catalysis depends on His9, which acts as the Tele-phosphohistidine intermediate. Glu87 serves as the catalytic Proton donor/acceptor.

This sequence belongs to the phosphoglycerate mutase family. BPG-dependent PGAM subfamily.

It catalyses the reaction (2R)-2-phosphoglycerate = (2R)-3-phosphoglycerate. It participates in carbohydrate degradation; glycolysis; pyruvate from D-glyceraldehyde 3-phosphate: step 3/5. In terms of biological role, catalyzes the interconversion of 2-phosphoglycerate and 3-phosphoglycerate. This chain is 2,3-bisphosphoglycerate-dependent phosphoglycerate mutase, found in Streptococcus mutans serotype c (strain ATCC 700610 / UA159).